Reading from the N-terminus, the 247-residue chain is Phosphoglycerate mutase 1 (247 aa).

Substrate-binding positions include 8–15 (RHGQSEWN) and 21–22 (TG). His9 serves as the catalytic Tele-phosphohistidine intermediate. At Ser12 the chain carries Phosphoserine. Lys31 is covalently cross-linked (Glycyl lysine isopeptide (Lys-Gly) (interchain with G-Cter in ubiquitin)). The residue at position 49 (Tyr49) is a Phosphotyrosine. Residue Lys57 forms a Glycyl lysine isopeptide (Lys-Gly) (interchain with G-Cter in ubiquitin) linkage. Arg60 provides a ligand contact to substrate. Lys71 participates in a covalent cross-link: Glycyl lysine isopeptide (Lys-Gly) (interchain with G-Cter in ubiquitin). Glu87 serves as the catalytic Proton donor/acceptor. Residues 87-90 (ERHY), Lys98, and 114-115 (RR) each bind substrate. A phosphoserine mark is found at Ser116, Ser127, and Ser128. Glycyl lysine isopeptide (Lys-Gly) (interchain with G-Cter in ubiquitin) cross-links involve residues Lys139 and Lys175. 183–184 (GN) is a binding site for substrate. The residue at position 185 (Ser185) is a Phosphoserine. Residue Lys191 forms a Glycyl lysine isopeptide (Lys-Gly) (interchain with G-Cter in ubiquitin) linkage. The residue at position 197 (Ser197) is a Phosphoserine.

This sequence belongs to the phosphoglycerate mutase family. BPG-dependent PGAM subfamily. In terms of assembly, homotetramer: dimer of dimers.

Its subcellular location is the cytoplasm. The protein resides in the mitochondrion outer membrane. It localises to the mitochondrion intermembrane space. It catalyses the reaction (2R)-2-phosphoglycerate = (2R)-3-phosphoglycerate. The protein operates within carbohydrate degradation; glycolysis; pyruvate from D-glyceraldehyde 3-phosphate: step 3/5. With respect to regulation, inhibited by inositol hexakisphosphate and benzene tri-, tetra- and hexacarboxylates. Functionally, interconversion of 3- and 2-phosphoglycerate with 2,3-bisphosphoglycerate as the primer of the reaction. Can also catalyze the reaction of EC 5.4.2.4 (synthase), but with a reduced activity. In Saccharomyces cerevisiae (strain ATCC 204508 / S288c) (Baker's yeast), this protein is Phosphoglycerate mutase 1 (GPM1).